The sequence spans 538 residues: Bifunctional purine biosynthesis protein PurH (538 aa).

In terms of domain architecture, MGS-like spans 6-158 (KHIPAPDLHR…KNHAYVATVV (153 aa)).

Belongs to the PurH family.

It carries out the reaction (6R)-10-formyltetrahydrofolate + 5-amino-1-(5-phospho-beta-D-ribosyl)imidazole-4-carboxamide = 5-formamido-1-(5-phospho-D-ribosyl)imidazole-4-carboxamide + (6S)-5,6,7,8-tetrahydrofolate. The catalysed reaction is IMP + H2O = 5-formamido-1-(5-phospho-D-ribosyl)imidazole-4-carboxamide. It participates in purine metabolism; IMP biosynthesis via de novo pathway; 5-formamido-1-(5-phospho-D-ribosyl)imidazole-4-carboxamide from 5-amino-1-(5-phospho-D-ribosyl)imidazole-4-carboxamide (10-formyl THF route): step 1/1. The protein operates within purine metabolism; IMP biosynthesis via de novo pathway; IMP from 5-formamido-1-(5-phospho-D-ribosyl)imidazole-4-carboxamide: step 1/1. The chain is Bifunctional purine biosynthesis protein PurH from Brucella abortus (strain S19).